The primary structure comprises 273 residues: Gamma-glutamyl cyclotransferase aclK (273 aa).

The protein belongs to the class-I pyridoxal-phosphate-dependent aminotransferase family.

It carries out the reaction an alpha-(gamma-L-glutamyl)-L-amino acid = 5-oxo-L-proline + an L-alpha-amino acid. It functions in the pathway mycotoxin biosynthesis. In terms of biological role, gamma-glutamyl cyclotransferase; part of the gene cluster that mediates the biosynthesis of aspirochlorine (or antibiotic A30641), an unusual halogenated spiro compound with distinctive antifungal properties due to selective inhibition of protein biosynthesis, and which is also active against bacteria, viruses, and murine tumor cells. The non-ribosomal peptide synthetase (NRPS) aclP is responsible the formation of the diketopiperazine (DKP) core from the condensation of 2 phenylalanine residues. One Phe residue is tailored into chlorotyrosine by hydroxylation and chlorination, whereas the second Phe undergoes an unprecedented C-C bond cleavage to be converted into glycine. After formation of the DKP, sulfur is incorporated into the DKP by conjugation with glutathione by aclG, followed by its stepwise degradation to the thiol by aclI, aclJ and aclK, and the dithiol oxidation by aclT. In addition, oxygenases (aclB, aclC, aclL and aclO) and O-methyltransferases (aclM and aclU) act as tailoring enzymes to produce the intermediate dechloroaspirochlorine. Ultimately, chlorination of dechloroaspirochlorine by the halogenase aclH is the last step in the aspirochlorine pathway. The sequence is that of Gamma-glutamyl cyclotransferase aclK from Aspergillus oryzae (strain ATCC 42149 / RIB 40) (Yellow koji mold).